A 410-amino-acid polypeptide reads, in one-letter code: ORC1-type DNA replication protein 4 (410 aa).

ATP contacts are provided by residues 73–77 (TGKSL), Tyr-220, and Arg-232.

This sequence belongs to the CDC6/cdc18 family.

Functionally, involved in regulation of DNA replication. The sequence is that of ORC1-type DNA replication protein 4 (orc4) from Halobacterium salinarum (strain ATCC 700922 / JCM 11081 / NRC-1) (Halobacterium halobium).